Reading from the N-terminus, the 655-residue chain is SRSF protein kinase 1 (655 aa).

A disordered region spans residues 1–57 (MERKVLALQARKKRTKAKKDKAQRKPETQHRGSAPHSESDLPEQEEEILGSDDDEQE). Residues 10–22 (ARKKRTKAKKDKA) show a composition bias toward basic residues. Over residues 40 to 57 (DLPEQEEEILGSDDDEQE) the composition is skewed to acidic residues. Ser51 bears the Phosphoserine; by CK2 mark. In terms of domain architecture, Protein kinase spans 80 to 653 (YHVIRKLGWG…AAECLRHPWL (574 aa)). Residues 86-94 (LGWGHFSTV) and Lys109 each bind ATP. Residue Asp213 is the Proton acceptor of the active site. Disordered stretches follow at residues 238–341 (WQRS…QDQT) and 397–417 (FLSSQNGDSSTSQETDSCTPI). Positions 265–276 (KNKKKKLKKKQK) are enriched in basic residues. 2 stretches are compositionally biased toward basic and acidic residues: residues 277 to 288 (RQAELLEKRMQE) and 304 to 318 (NKQEESESPVERPLK). Phosphoserine occurs at positions 309, 311, and 333. At Ser555 the chain carries Phosphoserine; by CK2.

This sequence belongs to the protein kinase superfamily. CMGC Ser/Thr protein kinase family. As to quaternary structure, monomer. Found in a multisubunit complex containing seven proteins, named toposome, which separates entangled circular chromatin DNA during chromosome segregation. Interacts with HHV-1 ICP27 protein. Interacts with DNAJC8 and AHSA1/AHA1 and this mediates formation of a complex with the Hsp70 /Hsp90 machinery. Binds to IGF2BP1, SYNCRIP, HNRNPA2B1 and HNRNPC. Interacts with SAFB/SAFB1 and SAFB2 which inhibits its activity. Mg(2+) serves as cofactor.

Its subcellular location is the cytoplasm. It is found in the nucleus. It localises to the nucleoplasm. The protein localises to the nucleus matrix. The protein resides in the microsome. Its subcellular location is the nucleus speckle. It is found in the chromosome. The enzyme catalyses L-seryl-[protein] + ATP = O-phospho-L-seryl-[protein] + ADP + H(+). It carries out the reaction L-threonyl-[protein] + ATP = O-phospho-L-threonyl-[protein] + ADP + H(+). Activated by phosphorylation on Ser-51 and Ser-555. Its function is as follows. Serine/arginine-rich protein-specific kinase which specifically phosphorylates its substrates at serine residues located in regions rich in arginine/serine dipeptides, known as RS domains and is involved in the phosphorylation of SR splicing factors and the regulation of splicing. Plays a central role in the regulatory network for splicing, controlling the intranuclear distribution of splicing factors in interphase cells and the reorganization of nuclear speckles during mitosis. Can influence additional steps of mRNA maturation, as well as other cellular activities, such as chromatin reorganization in somatic and sperm cells and cell cycle progression. Phosphorylates SFRS2, ZRSR2, LBR and PRM1. Phosphorylates SRSF1 using a directional (C-terminal to N-terminal) and a dual-track mechanism incorporating both processive phosphorylation (in which the kinase stays attached to the substrate after each round of phosphorylation) and distributive phosphorylation steps (in which the kinase and substrate dissociate after each phosphorylation event). The RS domain of SRSF1 binds first to a docking groove in the large lobe of the kinase domain of SRPK1. This induces certain structural changes in SRPK1 and/or RRM2 domain of SRSF1, allowing RRM2 to bind the kinase and initiate phosphorylation. The cycles continue for several phosphorylation steps in a processive manner (steps 1-8) until the last few phosphorylation steps (approximately steps 9-12). During that time, a mechanical stress induces the unfolding of the beta-4 motif in RRM2, which then docks at the docking groove of SRPK1. This also signals RRM2 to begin to dissociate, which facilitates SRSF1 dissociation after phosphorylation is completed. Can mediate hepatitis B virus (HBV) core protein phosphorylation. It plays a negative role in the regulation of HBV replication through a mechanism not involving the phosphorylation of the core protein but by reducing the packaging efficiency of the pregenomic RNA (pgRNA) without affecting the formation of the viral core particles. Can induce splicing of exon 10 in MAPT/TAU. In Pongo abelii (Sumatran orangutan), this protein is SRSF protein kinase 1.